The following is a 418-amino-acid chain: Probable endo-beta-1,4-glucanase celB (418 aa).

Positions 1 to 18 (MVRTFAVTALALLPLVAA) are cleaved as a signal peptide. 3 N-linked (GlcNAc...) asparagine glycosylation sites follow: asparagine 46, asparagine 118, and asparagine 136. Glutamate 215 acts as the Nucleophile in catalysis. The active-site Proton donor is glutamate 220. Asparagine 234 and asparagine 291 each carry an N-linked (GlcNAc...) asparagine glycan.

It belongs to the glycosyl hydrolase 7 (cellulase C) family.

The protein resides in the secreted. The catalysed reaction is Endohydrolysis of (1-&gt;4)-beta-D-glucosidic linkages in cellulose, lichenin and cereal beta-D-glucans.. Its function is as follows. Has endoglucanase activity on substrates containing beta-1,4 glycosidic bonds, like in carboxymethylcellulose (CMC), hydroxyethylcellulose (HEC) and beta-glucan. Involved in the degradation of complex natural cellulosic substrates. The protein is Probable endo-beta-1,4-glucanase celB (celB) of Aspergillus clavatus (strain ATCC 1007 / CBS 513.65 / DSM 816 / NCTC 3887 / NRRL 1 / QM 1276 / 107).